The following is a 266-amino-acid chain: tRNA pseudouridine synthase A (266 aa).

Residue Asp53 is the Nucleophile of the active site. Tyr109 is a substrate binding site.

Belongs to the tRNA pseudouridine synthase TruA family.

The enzyme catalyses uridine(38/39/40) in tRNA = pseudouridine(38/39/40) in tRNA. Its function is as follows. Formation of pseudouridine at positions 38, 39 and 40 in the anticodon stem and loop of transfer RNAs. This Methanocella arvoryzae (strain DSM 22066 / NBRC 105507 / MRE50) protein is tRNA pseudouridine synthase A.